Consider the following 91-residue polypeptide: Small ribosomal subunit protein uS19 (91 aa).

It belongs to the universal ribosomal protein uS19 family.

Its function is as follows. Protein S19 forms a complex with S13 that binds strongly to the 16S ribosomal RNA. In Hahella chejuensis (strain KCTC 2396), this protein is Small ribosomal subunit protein uS19.